A 407-amino-acid polypeptide reads, in one-letter code: Shaggy-related protein kinase GSK1 (407 aa).

Over residues 1 to 19 the composition is skewed to pro residues; that stretch reads MEAPPGPEPMELDAPPPPA. The tract at residues 1-21 is disordered; sequence MEAPPGPEPMELDAPPPPAAV. Residues 68 to 352 enclose the Protein kinase domain; the sequence is YMAERVVGTG…ALDACAHSFF (285 aa). ATP contacts are provided by residues 74–82 and K97; that span reads VGTGSFGIV. D193 functions as the Proton acceptor in the catalytic mechanism.

It belongs to the protein kinase superfamily. CMGC Ser/Thr protein kinase family. GSK-3 subfamily. In terms of assembly, interacts with LIC. Highly expressed in the entire young panicles, spikelets, awns, vascular bundles of palea and lemma, stigma and rachilla. Expressed in root tips, root hairs, lamina joint in the collar region, vascular bundles of coleoptiles.

The catalysed reaction is L-seryl-[protein] + ATP = O-phospho-L-seryl-[protein] + ADP + H(+). It carries out the reaction L-threonyl-[protein] + ATP = O-phospho-L-threonyl-[protein] + ADP + H(+). Its function is as follows. Probable serine-threonine kinase that may act as a negative regulator of brassinosteroid (BR) signaling during flower development. May have physiological roles in stress signal-transduction pathways. Phosphorylates LIC in response to BR perception. This Oryza sativa subsp. japonica (Rice) protein is Shaggy-related protein kinase GSK1.